The following is a 394-amino-acid chain: MSKEKFERTKPHVNVGTIGHVDHGKTTLTAAITTVLAKTYGGSARAFDQIDNAPEEKARGITINTSHVEYDTPSRHYAHVDCPGHADYVKNMITGAAQMDGAILVVAATDGPMPQTREHILLGRQVGVPYMIVFMNKCDMVDDEELLELVEMEVRELLSAYDFPGDDIPVVKGSALKALEGVKEWEDKIIELAGYLDTYIPEPERAVDKPFLLPIEDVFSISGRGTVVTGRVERGIVKVGEEVEIVGIKDTVKSTCTGVEMFRKLLDEGRAGENVGVLLRGIKREDIERGQVLAKPGSIKPHTTFESEVYILSKDEGGRHTPFFKGYRPQFYFRTTDVTGTIELPEGVEMVMPGDNINMVVTLIHPIAMDDGLRFAIREGGRTVGAGVVAKVIA.

The tr-type G domain occupies 10-204 (KPHVNVGTIG…YLDTYIPEPE (195 aa)). The segment at 19–26 (GHVDHGKT) is G1. Residue 19–26 (GHVDHGKT) participates in GTP binding. Thr-26 lines the Mg(2+) pocket. The segment at 60 to 64 (GITIN) is G2. The G3 stretch occupies residues 81–84 (DCPG). GTP is bound by residues 81 to 85 (DCPGH) and 136 to 139 (NKCD). The tract at residues 136 to 139 (NKCD) is G4. Positions 174-176 (SAL) are G5.

The protein belongs to the TRAFAC class translation factor GTPase superfamily. Classic translation factor GTPase family. EF-Tu/EF-1A subfamily. Monomer.

The protein localises to the cytoplasm. It carries out the reaction GTP + H2O = GDP + phosphate + H(+). GTP hydrolase that promotes the GTP-dependent binding of aminoacyl-tRNA to the A-site of ribosomes during protein biosynthesis. This Yersinia enterocolitica serotype O:8 / biotype 1B (strain NCTC 13174 / 8081) protein is Elongation factor Tu 2.